Consider the following 247-residue polypeptide: MNKLKKEANVFFKKNQTAASLDFKKTLPSIELFSATLNSEESQSLDQLFLSESQNYSDEEFYQEDILAVKLLTGQIKSIQKQHVLLLGEKIYNARKILSKDHFSSTTFSSWIELVFRTKSSAYNALAYYELFINLPNQTLQKEFQSIPYKSAYILAARKGDLKTKVDVIGKVCGMSNSSAIRVLDQFLPSSRNKDVRETIDKSDSEKNRQLSDFLIEILRIMCSGVSLSSYNENLLQQLFELFKQKS.

This sequence belongs to the UPF0137 (pGP6-D) family.

This Chlamydia trachomatis protein is Virulence plasmid protein pGP6-D.